The following is a 366-amino-acid chain: NADH-quinone oxidoreductase subunit D (366 aa).

It belongs to the complex I 49 kDa subunit family. As to quaternary structure, NDH-1 is composed of 14 different subunits. Subunits NuoB, C, D, E, F, and G constitute the peripheral sector of the complex.

The protein localises to the cell membrane. The catalysed reaction is a quinone + NADH + 5 H(+)(in) = a quinol + NAD(+) + 4 H(+)(out). Functionally, NDH-1 shuttles electrons from NADH, via FMN and iron-sulfur (Fe-S) centers, to quinones in the respiratory chain. The immediate electron acceptor for the enzyme in this species is believed to be a menaquinone. Couples the redox reaction to proton translocation (for every two electrons transferred, four hydrogen ions are translocated across the cytoplasmic membrane), and thus conserves the redox energy in a proton gradient. The chain is NADH-quinone oxidoreductase subunit D from Bacillus anthracis.